We begin with the raw amino-acid sequence, 330 residues long: Serpentine receptor class J-38 (330 aa).

7 helical membrane-spanning segments follow: residues 6 to 26 (IYIF…PIFV), 43 to 63 (LLLF…VVPI), 98 to 118 (LVAS…LVIY), 135 to 155 (LLLS…LGYA), 200 to 220 (TIIW…LALL), 253 to 273 (IPIV…IFGI), and 285 to 305 (GALG…LPIF).

It belongs to the nematode receptor-like protein srj family.

The protein localises to the membrane. The chain is Serpentine receptor class J-38 (srj-38) from Caenorhabditis elegans.